The primary structure comprises 525 residues: GMP synthase [glutamine-hydrolyzing] (525 aa).

The 199-residue stretch at 8–206 (PLLILDFGSQ…VVDICKASTD (199 aa)) folds into the Glutamine amidotransferase type-1 domain. The active-site Nucleophile is Cys85. Residues His180 and Glu182 contribute to the active site. Residues 207–400 (WTPEHIIDEA…LGLPHDMVYR (194 aa)) enclose the GMPS ATP-PPase domain. 234-240 (SGGVDSS) serves as a coordination point for ATP.

Homodimer.

It carries out the reaction XMP + L-glutamine + ATP + H2O = GMP + L-glutamate + AMP + diphosphate + 2 H(+). Its pathway is purine metabolism; GMP biosynthesis; GMP from XMP (L-Gln route): step 1/1. Functionally, catalyzes the synthesis of GMP from XMP. This Legionella pneumophila subsp. pneumophila (strain Philadelphia 1 / ATCC 33152 / DSM 7513) protein is GMP synthase [glutamine-hydrolyzing].